The sequence spans 123 residues: Ribonuclease P protein component (123 aa).

This sequence belongs to the RnpA family. As to quaternary structure, consists of a catalytic RNA component (M1 or rnpB) and a protein subunit.

It carries out the reaction Endonucleolytic cleavage of RNA, removing 5'-extranucleotides from tRNA precursor.. RNaseP catalyzes the removal of the 5'-leader sequence from pre-tRNA to produce the mature 5'-terminus. It can also cleave other RNA substrates such as 4.5S RNA. The protein component plays an auxiliary but essential role in vivo by binding to the 5'-leader sequence and broadening the substrate specificity of the ribozyme. The chain is Ribonuclease P protein component from Streptomyces griseus subsp. griseus (strain JCM 4626 / CBS 651.72 / NBRC 13350 / KCC S-0626 / ISP 5235).